Reading from the N-terminus, the 410-residue chain is 3-phosphoshikimate 1-carboxyvinyltransferase (410 aa).

3 residues coordinate 3-phosphoshikimate: Lys-21, Ser-22, and Arg-26. Position 21 (Lys-21) interacts with phosphoenolpyruvate. Phosphoenolpyruvate contacts are provided by Gly-69 and Arg-97. 6 residues coordinate 3-phosphoshikimate: Ser-143, Ser-144, Gln-145, Ser-171, Asp-288, and Lys-315. Gln-145 contributes to the phosphoenolpyruvate binding site. Catalysis depends on Asp-288, which acts as the Proton acceptor. Phosphoenolpyruvate-binding residues include Arg-319, Arg-364, and Lys-389.

It belongs to the EPSP synthase family. As to quaternary structure, monomer.

The protein localises to the cytoplasm. The enzyme catalyses 3-phosphoshikimate + phosphoenolpyruvate = 5-O-(1-carboxyvinyl)-3-phosphoshikimate + phosphate. It functions in the pathway metabolic intermediate biosynthesis; chorismate biosynthesis; chorismate from D-erythrose 4-phosphate and phosphoenolpyruvate: step 6/7. In terms of biological role, catalyzes the transfer of the enolpyruvyl moiety of phosphoenolpyruvate (PEP) to the 5-hydroxyl of shikimate-3-phosphate (S3P) to produce enolpyruvyl shikimate-3-phosphate and inorganic phosphate. This Bacteroides fragilis (strain YCH46) protein is 3-phosphoshikimate 1-carboxyvinyltransferase.